Consider the following 299-residue polypeptide: tRNA dimethylallyltransferase (299 aa).

10-17 (GPTAVGKT) contributes to the ATP binding site. 12 to 17 (TAVGKT) is a substrate binding site. Residues 35–38 (DSQQ) are interaction with substrate tRNA.

This sequence belongs to the IPP transferase family. In terms of assembly, monomer. It depends on Mg(2+) as a cofactor.

It carries out the reaction adenosine(37) in tRNA + dimethylallyl diphosphate = N(6)-dimethylallyladenosine(37) in tRNA + diphosphate. Functionally, catalyzes the transfer of a dimethylallyl group onto the adenine at position 37 in tRNAs that read codons beginning with uridine, leading to the formation of N6-(dimethylallyl)adenosine (i(6)A). This is tRNA dimethylallyltransferase from Streptococcus thermophilus (strain CNRZ 1066).